A 473-amino-acid chain; its full sequence is Zinc finger and SCAN domain-containing protein 21 (473 aa).

Lys27 participates in a covalent cross-link: Glycyl lysine isopeptide (Lys-Gly) (interchain with G-Cter in SUMO2). The 83-residue stretch at 45–127 folds into the SCAN box domain; it reads RQRFRQFGYH…TLLEDLEREL (83 aa). The segment at 127–171 is disordered; it reads LDEPGHQVSTPPNEQKPVWEKISSSGTAKESPSSMQPQPLETSHN. Polar residues predominate over residues 148–171; that stretch reads ISSSGTAKESPSSMQPQPLETSHN. Residues Lys221 and Lys232 each participate in a glycyl lysine isopeptide (Lys-Gly) (interchain with G-Cter in SUMO2) cross-link. Positions 244–272 are disordered; the sequence is LENEKGTKPPLQEAGSKKGRESVPTKPTP. Positions 258 to 272 are enriched in basic and acidic residues; that stretch reads GSKKGRESVPTKPTP. 7 C2H2-type zinc fingers span residues 277–299, 305–327, 333–354, 360–382, 388–410, 416–438, and 444–466; these read YICA…RRTH, YVCT…YRTH, YDCK…QRMH, YQCK…YRIH, YQCN…QRLH, YKCK…HRIH, and YWCH…QRVH. Residue Lys349 forms a Glycyl lysine isopeptide (Lys-Gly) (interchain with G-Cter in SUMO2) linkage.

Belongs to the krueppel C2H2-type zinc-finger protein family.

Its subcellular location is the nucleus. Its function is as follows. Strong transcriptional activator. Plays an important role in spermatogenesis; essential for the progression of meiotic prophase I in spermatocytes. The sequence is that of Zinc finger and SCAN domain-containing protein 21 (ZSCAN21) from Gorilla gorilla gorilla (Western lowland gorilla).